A 2542-amino-acid polypeptide reads, in one-letter code: Highly reducing polyketide synthase (2542 aa).

Positions 7–435 (PEPIAIVGMA…GANAHAILDA (429 aa)) constitute a Ketosynthase family 3 (KS3) domain. Active-site for beta-ketoacyl synthase activity residues include C182, H317, and H357. The Malonyl-CoA:ACP transacylase (MAT) domain maps to 545–872 (FVFTGQGAQW…NLVGSLFLSG (328 aa)). The tract at residues 927–1062 (HDLLGSRIPG…TTNETLRINS (136 aa)) is N-terminal hotdog fold. The PKS/mFAS DH domain occupies 927 to 1224 (HDLLGSRIPG…FLSLETATKE (298 aa)). H959 acts as the Proton acceptor; for dehydratase activity in catalysis. The C-terminal hotdog fold stretch occupies residues 1072–1224 (NKDSYVRRWY…FLSLETATKE (153 aa)). The Proton donor; for dehydratase activity role is filled by D1137. The interval 1275–1574 (LTQLAIRSVV…AGADIMLDDY (300 aa)) is methyltransferase (CMet) domain. The disordered stretch occupies residues 1606-1634 (VNGTNGINSTNSVNVTNDTSGINDTNRMN). The region spanning 1866 to 2186 (GKANSFYFES…QGDSVGSVVL (321 aa)) is the Enoyl reductase (ER) domain. The Ketoreductase (KR) domain maps to 2209-2389 (ASYLLVGCLG…QAMSMALGMI (181 aa)).

The cofactor is pantetheine 4'-phosphate.

The protein operates within antifungal biosynthesis. Highly reducing polyketide synthase; part of the gene cluster that mediates the biosynthesis of the tetrahydropyranyl antifungal agent lanomycin that acts as an inhibitor of CYP51 and blocks the ergosterol biosynthesis. The biosynthesis probably begins with the formation of an hexaketide, followed by methionine mediated alkylation of C-2 and C-6, and methylation of the reduced C-3 oxygen, pyran forming reductive ring closure, oxygenation of C-4, beta-keto reduction, enoyl reduction and dehydration of the remaining oxygens, and finally, acylation with glycine to complete the biosynthesis. In Pyrenophora dematioidea (Helminthosporium dematioideum), this protein is Highly reducing polyketide synthase.